The chain runs to 366 residues: Apolipoprotein A-V (366 aa).

An N-terminal signal peptide occupies residues 1–23 (MASMAAVLTWALALLSAFSATQA). 2 coiled-coil regions span residues 54–157 (ATLK…VGED) and 236–262 (TLKAKALHARIQQNLDQLREELSRAFA). A Phosphothreonine; by FAM20C modification is found at threonine 55. Serine 59 is modified (phosphoserine).

Belongs to the apolipoprotein A1/A4/E family. As to quaternary structure, interacts with GPIHBP1. Interacts with SORL1; this interaction leads to APOA5 internalization and sorting either to lysosomes and degradation, or to the trans-Golgi network. Phosphorylated by FAM20C in the extracellular medium. In terms of tissue distribution, liver and plasma.

The protein localises to the secreted. Its subcellular location is the early endosome. It is found in the late endosome. The protein resides in the golgi apparatus. It localises to the trans-Golgi network. Minor apolipoprotein mainly associated with HDL and to a lesser extent with VLDL. May also be associated with chylomicrons. Important determinant of plasma triglyceride (TG) levels by both being a potent stimulator of apo-CII lipoprotein lipase (LPL) TG hydrolysis and an inhibitor of the hepatic VLDL-TG production rate (without affecting the VLDL-apoB production rate). Activates poorly lecithin:cholesterol acyltransferase (LCAT) and does not enhance efflux of cholesterol from macrophages. Binds heparin. In Homo sapiens (Human), this protein is Apolipoprotein A-V (APOA5).